The chain runs to 135 residues: uncharacterized protein (135 aa).

Positions 2 to 71 constitute an HTH merR-type domain; it reads TYTTAKAAEK…LKDIKRFAEC (70 aa). Positions 5-24 form a DNA-binding region, H-T-H motif; sequence TAKAAEKIGISAYTLRFYDK.

This is an uncharacterized protein from Haemophilus influenzae (strain ATCC 51907 / DSM 11121 / KW20 / Rd).